Consider the following 317-residue polypeptide: Ubiquinone biosynthesis protein COQ9, mitochondrial (317 aa).

Residues 1-46 constitute a mitochondrion transit peptide; it reads MAASVARVLKAAGGRQLLLMVARRRPVLRQPFLLMPRKFWGTSALR. The interval 45 to 97 is disordered; sequence LRSEDQKQPPFSSTSAHAGTPEHAEEQYQQQQPPPRYTDQAGEESEGYESEEQ. Residues 85–96 show a composition bias toward acidic residues; it reads AGEESEGYESEE. Arg243 lines the a 1,2-diacylglycero-3-phosphoethanolamine pocket.

It belongs to the COQ9 family. Homodimer. Heterodimer; two heterodimers of COQ7:COQ9 come together on the same side of the lipid pseudo-bilayer and form a curved tetramer with a hydrophobic surface suitable for membrane interaction. These two tetramers assemble into a soluble octamer with a pseudo-bilayer of lipids captured within. Interacts with COQ7; this interaction allows ubiquinone (CoQ) isoprene intermediates presentation to COQ7 and facilitates the COQ7-mediated hydroxylase step.

It localises to the mitochondrion. It participates in cofactor biosynthesis; ubiquinone biosynthesis. Membrane-associated protein that warps the membrane surface to access and bind aromatic isoprenes with high specificity, including ubiquinone (CoQ) isoprene intermediates and presents them directly to COQ7, therefore facilitating the COQ7-mediated hydroxylase step. Participates in the biosynthesis of coenzyme Q, also named ubiquinone, an essential lipid-soluble electron transporter for aerobic cellular respiration. The sequence is that of Ubiquinone biosynthesis protein COQ9, mitochondrial from Xenopus tropicalis (Western clawed frog).